Reading from the N-terminus, the 158-residue chain is S-ribosylhomocysteine lyase (158 aa).

Fe cation-binding residues include histidine 54, histidine 58, and cysteine 124.

Belongs to the LuxS family. As to quaternary structure, homodimer. It depends on Fe cation as a cofactor.

It carries out the reaction S-(5-deoxy-D-ribos-5-yl)-L-homocysteine = (S)-4,5-dihydroxypentane-2,3-dione + L-homocysteine. Involved in the synthesis of autoinducer 2 (AI-2) which is secreted by bacteria and is used to communicate both the cell density and the metabolic potential of the environment. The regulation of gene expression in response to changes in cell density is called quorum sensing. Catalyzes the transformation of S-ribosylhomocysteine (RHC) to homocysteine (HC) and 4,5-dihydroxy-2,3-pentadione (DPD). In Lactobacillus johnsonii (strain CNCM I-12250 / La1 / NCC 533), this protein is S-ribosylhomocysteine lyase.